The following is a 290-amino-acid chain: ATP synthase gamma chain (290 aa).

This sequence belongs to the ATPase gamma chain family. F-type ATPases have 2 components, CF(1) - the catalytic core - and CF(0) - the membrane proton channel. CF(1) has five subunits: alpha(3), beta(3), gamma(1), delta(1), epsilon(1). CF(0) has three main subunits: a, b and c.

It localises to the cell inner membrane. Produces ATP from ADP in the presence of a proton gradient across the membrane. The gamma chain is believed to be important in regulating ATPase activity and the flow of protons through the CF(0) complex. The chain is ATP synthase gamma chain from Amoebophilus asiaticus (strain 5a2).